Here is a 114-residue protein sequence, read N- to C-terminus: Large ribosomal subunit protein uL22 (114 aa).

The protein belongs to the universal ribosomal protein uL22 family. Part of the 50S ribosomal subunit.

In terms of biological role, this protein binds specifically to 23S rRNA; its binding is stimulated by other ribosomal proteins, e.g. L4, L17, and L20. It is important during the early stages of 50S assembly. It makes multiple contacts with different domains of the 23S rRNA in the assembled 50S subunit and ribosome. Functionally, the globular domain of the protein is located near the polypeptide exit tunnel on the outside of the subunit, while an extended beta-hairpin is found that lines the wall of the exit tunnel in the center of the 70S ribosome. This is Large ribosomal subunit protein uL22 from Aeromonas hydrophila subsp. hydrophila (strain ATCC 7966 / DSM 30187 / BCRC 13018 / CCUG 14551 / JCM 1027 / KCTC 2358 / NCIMB 9240 / NCTC 8049).